A 55-amino-acid polypeptide reads, in one-letter code: uncharacterized protein (55 aa).

This is an uncharacterized protein from Escherichia coli (strain K12).